A 656-amino-acid chain; its full sequence is Tetratricopeptide repeat protein 30 homolog (656 aa).

TPR repeat units lie at residues 9-42, 43-76, 141-174, 176-208, 238-271, 378-412, 416-449, 451-484, and 537-570; these read EGEFTSTIYTLIHEHKFNDAIRILQYQHERNPKN, LAALSLLAYCYYYTQDFMNAADCYSQLSYNFPQY, AAVIINTACIDYKEGNYEEALKKFNEATEFSGYQ, GLAYSIALCHYRRGDYDSALKLISEIINRGVKD, IEAFNLKFAIYYRTKDFKAAKESLTDMPPRNEHD, RKTAIEIQIKKEQKTTDSDDSLEMRNLIESYDDSL, LPVLMTYAKYYWDKRDYQAVEKLFRNSVDYCKEH, TWKLNVAHTIFMQEKKYKDAAAFYEPIVHKKYDD, and SIISLVIGSLYCSKGNFEFGISRVVKALEPPEKK.

It belongs to the TTC30/dfy-1/fleer family. Component of the IFT complex B composed of at least che-2, che-13, dyf-1, dyf-3, dyf-6, dyf-11, dyf-13, ift-20, ift-74, ift-81, ifta-2, osm-1, osm-5 and osm-6. In terms of tissue distribution, expressed in most amphid, both phasmid and several labial-quadrant neurons.

Its subcellular location is the cell projection. The protein resides in the cilium. Its function is as follows. Plays a role in anterograde intraflagellar transport (IFT), the process by which cilia precursors are transported from the base of the cilium to the site of their incorporation at the tip. Specifically required for the kinesin osm-3 to dock onto and move the IFT particles which contain these precursors. Component of the intraflagellar transport (IFT) complex B required for transport of proteins in the motile cilium. May be required for ciliary entrance and transport of specific ciliary cargo proteins such as che-3 which are related to motility. Required for polyglutamylation of axonemal tubulin in sensory cilia. In Caenorhabditis elegans, this protein is Tetratricopeptide repeat protein 30 homolog.